We begin with the raw amino-acid sequence, 187 residues long: UPF0340 protein SPG_0604 (187 aa).

This sequence belongs to the UPF0340 family.

The sequence is that of UPF0340 protein SPG_0604 from Streptococcus pneumoniae serotype 19F (strain G54).